Reading from the N-terminus, the 544-residue chain is Chaperonin GroEL (544 aa).

ATP-binding positions include 30–33 (TLGP), K51, 87–91 (DGTTT), G415, 478–480 (DVA), and D494. The tract at residues 524 to 544 (PEKEKKPATPAGAGGMGDMEY) is disordered. A compositionally biased stretch (gly residues) spans 535–544 (GAGGMGDMEY).

This sequence belongs to the chaperonin (HSP60) family. Forms a cylinder of 14 subunits composed of two heptameric rings stacked back-to-back. Interacts with the co-chaperonin GroES.

The protein localises to the cytoplasm. The catalysed reaction is ATP + H2O + a folded polypeptide = ADP + phosphate + an unfolded polypeptide.. In terms of biological role, together with its co-chaperonin GroES, plays an essential role in assisting protein folding. The GroEL-GroES system forms a nano-cage that allows encapsulation of the non-native substrate proteins and provides a physical environment optimized to promote and accelerate protein folding. This chain is Chaperonin GroEL, found in Methylacidiphilum infernorum (isolate V4) (Methylokorus infernorum (strain V4)).